Here is a 337-residue protein sequence, read N- to C-terminus: Protein EXORDIUM-like 3 (337 aa).

Residues 1–25 (MHSLPVNLVLTVLTVFLTSPAQVIG) form the signal peptide. 3 N-linked (GlcNAc...) asparagine glycosylation sites follow: N34, N66, and N119.

This sequence belongs to the EXORDIUM family.

The protein localises to the secreted. The protein resides in the extracellular space. Its subcellular location is the apoplast. In terms of biological role, may play a role in a brassinosteroid-dependent regulation of growth and development. This chain is Protein EXORDIUM-like 3 (EXL3), found in Arabidopsis thaliana (Mouse-ear cress).